Here is a 227-residue protein sequence, read N- to C-terminus: MSIFLVTGTSTDVGKTVVTAALASVALQSGKSVAVLKPAQTGVDVDGAGDLAEIERLTGGGVTLVELARYPEPLAPDTAARRSGLPLLALDDVVRVARDLDTTHDLTLIEGAGGLLVRLGVDGFTARDLAAALAAPVVLVVASGLGTLNHTALTVEALGASGVECAGLVIGSWPQEPDLAERCNREDLVSVSGVPLLGLMPAGSGSESVQEFAQTAWGALGKSPLAI.

Residue 12–17 (DVGKTV) coordinates ATP. Threonine 16 is a binding site for Mg(2+). The active site involves lysine 37. Threonine 41 contributes to the substrate binding site. ATP is bound by residues aspartate 50, 110–113 (EGAG), 171–172 (GS), and 201–203 (PAG). Residues aspartate 50 and glutamate 110 each contribute to the Mg(2+) site.

This sequence belongs to the dethiobiotin synthetase family. As to quaternary structure, homodimer. Mg(2+) is required as a cofactor.

Its subcellular location is the cytoplasm. It catalyses the reaction (7R,8S)-7,8-diammoniononanoate + CO2 + ATP = (4R,5S)-dethiobiotin + ADP + phosphate + 3 H(+). It participates in cofactor biosynthesis; biotin biosynthesis; biotin from 7,8-diaminononanoate: step 1/2. In terms of biological role, catalyzes a mechanistically unusual reaction, the ATP-dependent insertion of CO2 between the N7 and N8 nitrogen atoms of 7,8-diaminopelargonic acid (DAPA, also called 7,8-diammoniononanoate) to form a ureido ring. The chain is ATP-dependent dethiobiotin synthetase BioD from Rhodococcus erythropolis (strain PR4 / NBRC 100887).